The primary structure comprises 606 residues: MTTADARTPASKQNDGTPDGTTPDAGTPNDGAGKSIGWHKGYVQGSRPDLRVPVRQVHLTNGKHVTLYDTSGPYTDASVDTDVRRGLAPLRENWIIARGDTEEYAGRPVRPEDDGLKHTSPRGGLRNLDAVFPGRPRQPRRSRDGRPVTQLAYARRGEVTPEMEYVAIRENVEAEVVREEIAAGRAVLPANVNHPEIEPMIIGKRFLVKVNANIGNSAVTSSIEEEVDKMTWATQWGADTVMDLSTGRNIHTTREWVLRNSPVPIGTVPLYQALEKVDGRAEELTWEIYKDTVIEQAEQGVDYMTVHAGVRLPYVPLTARRKTGIVSRGGSIMAAWCLAHHKESFLYEHFEELCEILATYDVTYSLGDGLRPGSIADANDEAQFAELRTLGELNTVAKRFGVQTMIEGPGHVPMHKIKENIDLQQEICEEAPFYTLGPLTTDVAPAYDHITSGIGAAMIAWWGTAMLCYVTPKEHLGLPNRDDVKTGVITYKIAAHAADLAKGHPGAQEWDDALSDARFEFRWEDQFNLALDPDTAREFHDETLPAEPAKTAHFCSMCGPKFCSMKISQDIRRQHGGSREEIEEGMAEKSKEFAAAGNRVYLPIAD.

Positions 1-13 (MTTADARTPASKQ) are enriched in polar residues. 2 disordered regions span residues 1 to 49 (MTTA…SRPD) and 105 to 147 (AGRP…DGRP). A compositionally biased stretch (low complexity) spans 14-31 (NDGTPDGTTPDAGTPNDG). A compositionally biased stretch (basic and acidic residues) spans 105–117 (AGRPVRPEDDGLK). Substrate contacts are provided by residues Asn213, Met242, Tyr271, His307, 327 to 329 (SRG), 368 to 371 (DGLR), and Glu407. Residue His411 coordinates Zn(2+). Substrate is bound at residue Tyr434. Position 475 (His475) interacts with Zn(2+). [4Fe-4S] cluster contacts are provided by Cys555, Cys558, and Cys563.

The protein belongs to the ThiC family. [4Fe-4S] cluster is required as a cofactor.

The catalysed reaction is 5-amino-1-(5-phospho-beta-D-ribosyl)imidazole + S-adenosyl-L-methionine = 4-amino-2-methyl-5-(phosphooxymethyl)pyrimidine + CO + 5'-deoxyadenosine + formate + L-methionine + 3 H(+). It functions in the pathway cofactor biosynthesis; thiamine diphosphate biosynthesis. Its function is as follows. Catalyzes the synthesis of the hydroxymethylpyrimidine phosphate (HMP-P) moiety of thiamine from aminoimidazole ribotide (AIR) in a radical S-adenosyl-L-methionine (SAM)-dependent reaction. The polypeptide is Phosphomethylpyrimidine synthase (Streptomyces griseus subsp. griseus (strain JCM 4626 / CBS 651.72 / NBRC 13350 / KCC S-0626 / ISP 5235)).